The following is a 112-amino-acid chain: MGVKAYLDGILGEDKACKFLKKQGFEILKRNFHSKFGEIDIIAKKDEILHFIEIKFTQNNYEVSERLDRKKLEKILKTIEFYHLKNGISSDFQIDLICIKNDVIQFCENISF.

Belongs to the UPF0102 family.

This Campylobacter jejuni subsp. doylei (strain ATCC BAA-1458 / RM4099 / 269.97) protein is UPF0102 protein JJD26997_0163.